Here is a 74-residue protein sequence, read N- to C-terminus: Somatostatin-2 (74 aa).

The propeptide occupies 1–46 (ARGAGLLSQDWSAVEDLLAQMSLPEADAQREAEVVSVATGGRLNLE). An intrachain disulfide couples Cys-63 to Cys-74.

Belongs to the somatostatin family.

It is found in the secreted. Somatostatin inhibits the release of somatotropin. The polypeptide is Somatostatin-2 (sst2) (Myoxocephalus scorpius (Shorthorn sculpin)).